Reading from the N-terminus, the 151-residue chain is Transcriptional repressor NrdR (151 aa).

Residues 3-34 (CPFCHNDQSRVIDSRVIDSGSAIRRRRECTQC) fold into a zinc finger. The region spanning 46–136 (LLVVKRNGLT…VYKSFESADD (91 aa)) is the ATP-cone domain.

Belongs to the NrdR family. It depends on Zn(2+) as a cofactor.

Negatively regulates transcription of bacterial ribonucleotide reductase nrd genes and operons by binding to NrdR-boxes. The protein is Transcriptional repressor NrdR of Corynebacterium diphtheriae (strain ATCC 700971 / NCTC 13129 / Biotype gravis).